The following is a 174-amino-acid chain: Ferredoxin-thioredoxin reductase, variable chain, chloroplastic (174 aa).

The N-terminal 62 residues, 1–62, are a transit peptide targeting the chloroplast; sequence MTTGVAVMSS…RTRARLAICC (62 aa). The segment covering 69–81 has biased composition (low complexity); that stretch reads DSSTGFDSSSSSP. The segment at 69–89 is disordered; sequence DSSTGFDSSSSSPPEEDEELK. A phosphoserine mark is found at S70 and S71.

It belongs to the ferredoxin thioredoxin reductase alpha subunit family. In terms of assembly, heterodimer of subunit A (variable subunit) and subunit B (catalytic subunit). Heterodimeric FTR forms a complex with ferredoxin and thioredoxin.

The protein resides in the plastid. It is found in the chloroplast. Its function is as follows. Variable subunit of the ferredoxin-thioredoxin reductase (FTR), which catalyzes the two-electron reduction of thioredoxins by the electrons provided by reduced ferredoxin. This chain is Ferredoxin-thioredoxin reductase, variable chain, chloroplastic (FTRV), found in Spinacia oleracea (Spinach).